Reading from the N-terminus, the 88-residue chain is Small ribosomal subunit protein bS16 (88 aa).

It belongs to the bacterial ribosomal protein bS16 family.

The polypeptide is Small ribosomal subunit protein bS16 (Syntrophomonas wolfei subsp. wolfei (strain DSM 2245B / Goettingen)).